The primary structure comprises 346 residues: Elongation factor Ts (346 aa).

Residues 80-83 are involved in Mg(2+) ion dislocation from EF-Tu; the sequence is TDFV.

This sequence belongs to the EF-Ts family.

It localises to the cytoplasm. Associates with the EF-Tu.GDP complex and induces the exchange of GDP to GTP. It remains bound to the aminoacyl-tRNA.EF-Tu.GTP complex up to the GTP hydrolysis stage on the ribosome. In Streptococcus pyogenes serotype M18 (strain MGAS8232), this protein is Elongation factor Ts.